Here is a 397-residue protein sequence, read N- to C-terminus: Elongation factor Tu (397 aa).

Residues 10 to 207 form the tr-type G domain; sequence KPHVNVGTIG…TLDTYIPEPE (198 aa). The G1 stretch occupies residues 19–26; that stretch reads GHVDHGKT. 19–26 is a binding site for GTP; it reads GHVDHGKT. Residue T26 coordinates Mg(2+). The segment at 60–64 is G2; that stretch reads GITIN. Residues 81–84 form a G3 region; the sequence is DCPG. GTP contacts are provided by residues 81 to 85 and 136 to 139; these read DCPGH and NKAD. The interval 136-139 is G4; the sequence is NKAD. A G5 region spans residues 174–176; the sequence is SAL.

It belongs to the TRAFAC class translation factor GTPase superfamily. Classic translation factor GTPase family. EF-Tu/EF-1A subfamily. As to quaternary structure, monomer.

Its subcellular location is the cytoplasm. It catalyses the reaction GTP + H2O = GDP + phosphate + H(+). Its function is as follows. GTP hydrolase that promotes the GTP-dependent binding of aminoacyl-tRNA to the A-site of ribosomes during protein biosynthesis. This is Elongation factor Tu from Pseudomonas fluorescens (strain ATCC BAA-477 / NRRL B-23932 / Pf-5).